A 306-amino-acid chain; its full sequence is GTPase IMAP family member 1 (306 aa).

Residues Met-1 to Gln-21 are disordered. Residues Met-1–Arg-272 are Cytoplasmic-facing. Residues Glu-25–Gln-229 enclose the AIG1-type G domain. The segment at Gly-34–Ser-41 is G1. GTP contacts are provided by residues Gly-34–Ala-42 and Ser-55. Positions Ser-61 to Ala-65 are G2. The G3 stretch occupies residues Asp-82–Asp-85. Residues Thr-152–Glu-155 form a G4 region. Residues Arg-153–Glu-155 and Asn-190 contribute to the GTP site. Residues Asp-189–Arg-191 form a G5 region. Residues Ser-273–Leu-292 form a helical; Anchor for type IV membrane protein membrane-spanning segment. Topologically, residues His-293–Asp-306 are lumenal.

The protein belongs to the TRAFAC class TrmE-Era-EngA-EngB-Septin-like GTPase superfamily. AIG1/Toc34/Toc159-like paraseptin GTPase family. IAN subfamily. As to expression, predominantly expressed in the spleen and to a lesser extent in the lymph nodes. Detected in T-cells.

It is found in the endoplasmic reticulum membrane. The protein localises to the golgi apparatus membrane. Its function is as follows. May regulate lymphocyte survival. Required for normal levels of mature T-lymphocytes and mature B-cells. This Homo sapiens (Human) protein is GTPase IMAP family member 1 (GIMAP1).